The chain runs to 431 residues: Bifunctional protein GlmU (431 aa).

Residues 1–223 (MNLSIVILAA…EENFKGVNSK (223 aa)) form a pyrophosphorylase region. UDP-N-acetyl-alpha-D-glucosamine-binding positions include 8–11 (LAAG), K22, Q74, and 81–82 (GT). D102 is a Mg(2+) binding site. Positions 135, 149, 164, and 221 each coordinate UDP-N-acetyl-alpha-D-glucosamine. N221 is a binding site for Mg(2+). Positions 224 to 244 (ADLAEAEAIMTGRIRRRWMRE) are linker. The interval 245–431 (GVRMRLPETI…FFARYFSSSK (187 aa)) is N-acetyltransferase. UDP-N-acetyl-alpha-D-glucosamine-binding residues include R308 and K325. H336 acts as the Proton acceptor in catalysis. Y339 and N350 together coordinate UDP-N-acetyl-alpha-D-glucosamine. Residues A353, 359-360 (NY), S378, A396, and R413 contribute to the acetyl-CoA site.

It in the N-terminal section; belongs to the N-acetylglucosamine-1-phosphate uridyltransferase family. This sequence in the C-terminal section; belongs to the transferase hexapeptide repeat family. As to quaternary structure, homotrimer. Mg(2+) serves as cofactor.

The protein localises to the cytoplasm. It catalyses the reaction alpha-D-glucosamine 1-phosphate + acetyl-CoA = N-acetyl-alpha-D-glucosamine 1-phosphate + CoA + H(+). It carries out the reaction N-acetyl-alpha-D-glucosamine 1-phosphate + UTP + H(+) = UDP-N-acetyl-alpha-D-glucosamine + diphosphate. The protein operates within nucleotide-sugar biosynthesis; UDP-N-acetyl-alpha-D-glucosamine biosynthesis; N-acetyl-alpha-D-glucosamine 1-phosphate from alpha-D-glucosamine 6-phosphate (route II): step 2/2. Its pathway is nucleotide-sugar biosynthesis; UDP-N-acetyl-alpha-D-glucosamine biosynthesis; UDP-N-acetyl-alpha-D-glucosamine from N-acetyl-alpha-D-glucosamine 1-phosphate: step 1/1. It participates in bacterial outer membrane biogenesis; LPS lipid A biosynthesis. In terms of biological role, catalyzes the last two sequential reactions in the de novo biosynthetic pathway for UDP-N-acetylglucosamine (UDP-GlcNAc). The C-terminal domain catalyzes the transfer of acetyl group from acetyl coenzyme A to glucosamine-1-phosphate (GlcN-1-P) to produce N-acetylglucosamine-1-phosphate (GlcNAc-1-P), which is converted into UDP-GlcNAc by the transfer of uridine 5-monophosphate (from uridine 5-triphosphate), a reaction catalyzed by the N-terminal domain. In Wolinella succinogenes (strain ATCC 29543 / DSM 1740 / CCUG 13145 / JCM 31913 / LMG 7466 / NCTC 11488 / FDC 602W) (Vibrio succinogenes), this protein is Bifunctional protein GlmU.